A 152-amino-acid chain; its full sequence is UPF0756 membrane protein PEPE_1090 (152 aa).

4 helical membrane passes run 4–24 (WLFLIGIFIVALLGKNQSLII), 52–72 (WGVTIISITILVPIATGKIGF), 85–105 (WIAVACGILVSLLSYQGVGFL), and 115–135 (LVMGTIIGVVFMNGIAAGPII).

This sequence belongs to the UPF0756 family.

The protein localises to the cell membrane. The chain is UPF0756 membrane protein PEPE_1090 from Pediococcus pentosaceus (strain ATCC 25745 / CCUG 21536 / LMG 10740 / 183-1w).